The following is a 210-amino-acid chain: Imidazoleglycerol-phosphate dehydratase (210 aa).

It belongs to the imidazoleglycerol-phosphate dehydratase family.

The enzyme catalyses D-erythro-1-(imidazol-4-yl)glycerol 3-phosphate = 3-(imidazol-4-yl)-2-oxopropyl phosphate + H2O. Its pathway is amino-acid biosynthesis; L-histidine biosynthesis; L-histidine from 5-phospho-alpha-D-ribose 1-diphosphate: step 6/9. This chain is Imidazoleglycerol-phosphate dehydratase (HIS3), found in Candida glabrata (strain ATCC 2001 / BCRC 20586 / JCM 3761 / NBRC 0622 / NRRL Y-65 / CBS 138) (Yeast).